The following is a 155-amino-acid chain: Small ribosomal subunit protein uS7 (155 aa).

The protein belongs to the universal ribosomal protein uS7 family. In terms of assembly, part of the 30S ribosomal subunit. Contacts proteins S9 and S11.

One of the primary rRNA binding proteins, it binds directly to 16S rRNA where it nucleates assembly of the head domain of the 30S subunit. Is located at the subunit interface close to the decoding center, probably blocks exit of the E-site tRNA. The polypeptide is Small ribosomal subunit protein uS7 (Mycoplasmoides gallisepticum (strain R(low / passage 15 / clone 2)) (Mycoplasma gallisepticum)).